Reading from the N-terminus, the 170-residue chain is Fimbrial protein (170 aa).

A propeptide spanning residues 1–7 (MNTLQKG) is cleaved from the precursor. Phe8 carries the N-methylphenylalanine modification. Residues 8–28 (FTLIELMIVIAIVGILAAVAL) traverse the membrane as a helical segment. The O-linked (Gal...) serine glycan is linked to Ser70. Position 100 is an O-(sn-1-glycerophosphoryl)serine (Ser100). A disulfide bond links Cys127 and Cys163.

Belongs to the N-Me-Phe pilin family. In terms of assembly, the pili are polar flexible filaments of about 5.4 nanometers diameter and 2.5 micrometers average length; they consist of only a single polypeptide chain arranged in a helical configuration of five subunits per turn in the assembled pilus. Post-translationally, O-linked glycan consists of GlcNAc-Gal disaccharide.

It is found in the fimbrium. It localises to the membrane. Functionally, major component of the type IV pilus (T4P) that plays a role in cellular adherence, microcolony formation as well as twitching motility. This Neisseria meningitidis serogroup A / serotype 4A (strain DSM 15465 / Z2491) protein is Fimbrial protein (pilE).